The chain runs to 412 residues: cAMP-dependent protein kinase regulatory subunit (412 aa).

The interval 1-142 (MSFEEVYEEL…RLKRSVAGNF (142 aa)) is dimerization and phosphorylation. Positions 101-105 (RRQSV) match the Pseudophosphorylation motif motif. A Phosphoserine modification is found at S104. Residues 143–277 (LFKN…EEVP), E224, R233, 278–412 (ILSS…STKA), E344, and R353 contribute to the 3',5'-cyclic AMP site. The tract at residues 392–412 (MGMDNEYGDQSLHRSPPSTKA) is disordered.

This sequence belongs to the cAMP-dependent kinase regulatory chain family. Tetramer, composed of 2 regulatory (R) and 2 catalytic (C) subunits. In the presence of cAMP it dissociates into 2 active monomeric C subunits and an R dimer.

This chain is cAMP-dependent protein kinase regulatory subunit (cgs1), found in Schizosaccharomyces pombe (strain 972 / ATCC 24843) (Fission yeast).